A 662-amino-acid chain; its full sequence is PAN2-PAN3 deadenylation complex subunit PAN3 (662 aa).

Disordered stretches follow at residues 1–26 (MASAGKPTLDDSRRATGSPKMKAREN) and 59–131 (TTYQ…RAET). The C3H1-type zinc finger occupies 26–55 (NAKDTLCRNVTIYGRCRYEDKGCAFNHDPH). Residues 72–85 (DSPSFTPSLLSSNG) show a composition bias toward polar residues. Residues 86–102 (SSPTTASVTAKKAATIS) are compositionally biased toward low complexity. The span at 114–126 (RNITSRSNTSTPS) shows a compositional bias: polar residues. The interval 265 to 525 (QTLPNTQLPA…NIDIFITGIS (261 aa)) is pseudokinase domain. Residues arginine 317, 366–373 (DYHPLSKT), and 425–426 (SK) contribute to the ATP site. The stretch at 526-564 (SQLMSTFDSALHLDDELTSDLSRELENGRLVRLVTKLNF) forms a coiled coil. The interval 565-662 (VNERPEYEHD…ALLKPTRRLH (98 aa)) is knob domain.

It belongs to the protein kinase superfamily. PAN3 family. Homodimer. Forms a heterotrimer with a catalytic subunit pan2 to form the poly(A)-nuclease (PAN) deadenylation complex. Interacts (via PAM-2 motif) with poly(A)-binding protein pab1 (via PABC domain), conferring substrate specificity of the enzyme complex.

The protein localises to the cytoplasm. Functionally, regulatory subunit of the poly(A)-nuclease (PAN) deadenylation complex, one of two cytoplasmic mRNA deadenylases involved in mRNA turnover. PAN specifically shortens poly(A) tails of RNA and the activity is stimulated by poly(A)-binding protein pab1. PAN deadenylation is followed by rapid degradation of the shortened mRNA tails by the CCR4-NOT complex. Deadenylated mRNAs are then degraded by two alternative mechanisms, namely exosome-mediated 3'-5' exonucleolytic degradation, or deadenylation-dependent mRNA decaping and subsequent 5'-3' exonucleolytic degradation by xrn1. May also be involved in post-transcriptional maturation of mRNA poly(A) tails. pan3 acts as a positive regulator for PAN activity, recruiting the catalytic subunit pan2 to mRNA via its interaction with RNA and with pab1. This chain is PAN2-PAN3 deadenylation complex subunit PAN3, found in Aspergillus oryzae (strain ATCC 42149 / RIB 40) (Yellow koji mold).